Reading from the N-terminus, the 109-residue chain is uncharacterized protein (109 aa).

The interval 67–96 is disordered; the sequence is YFGNKLWRPTPRSGQSGQSRPKTGPHGSQR. The span at 78–87 shows a compositional bias: polar residues; that stretch reads RSGQSGQSRP.

This is an uncharacterized protein from Saccharomyces cerevisiae (strain ATCC 204508 / S288c) (Baker's yeast).